Consider the following 686-residue polypeptide: Alpha-amylase 1 (686 aa).

Residue glutamate 125 is the Nucleophile of the active site. Aspartate 216 functions as the Proton donor in the catalytic mechanism.

The protein belongs to the glycosyl hydrolase 57 family.

The protein localises to the cytoplasm. It carries out the reaction Endohydrolysis of (1-&gt;4)-alpha-D-glucosidic linkages in polysaccharides containing three or more (1-&gt;4)-alpha-linked D-glucose units.. Its function is as follows. This amylase is a highly liquefying-type: oligomers appeared at the beginning of incubation, followed by a graded decrease in the amounts of maltotriose, maltose and glucose in prolonged incubation. The sequence is that of Alpha-amylase 1 (amyA) from Dictyoglomus thermophilum (strain ATCC 35947 / DSM 3960 / H-6-12).